The sequence spans 99 residues: uncharacterized protein (99 aa).

This is an uncharacterized protein from Micromonospora olivasterospora.